A 1358-amino-acid polypeptide reads, in one-letter code: Phosphoinositide 3-kinase regulatory subunit 4 (1358 aa).

The N-myristoyl glycine moiety is linked to residue Gly2. The Protein kinase domain occupies 26-324 (FEYDKSLGST…AFPEVFYTFL (299 aa)). ATP-binding positions include 32–40 (LGSTRFFKV) and Lys53. Asp148 acts as the Proton acceptor in catalysis. 4 HEAT repeats span residues 413 to 450 (ILLD…LVQE), 458 to 495 (IYPE…TALR), 572 to 610 (KAND…YVGW), and 612 to 648 (SSSI…LGLL). A phosphoserine mark is found at Ser808, Ser813, Ser853, and Ser865. The tract at residues 875-899 (LPKTSDHEVVPTGKSPRSESSAGVC) is disordered. WD repeat units follow at residues 991–1030 (EHKS…GKTT), 1040–1079 (RIGG…LPKS), 1093–1134 (KEDG…NAWT), 1139–1178 (LKSG…PISS), 1182–1223 (PSRA…RRLT), and 1237–1278 (PSPH…RSYV). A disordered region spans residues 1307–1326 (KQKVGPSDDTPRRGPESLPV). The segment covering 1315-1326 (DTPRRGPESLPV) has biased composition (basic and acidic residues). Thr1316 is modified (phosphothreonine). One copy of the WD 7 repeat lies at 1327 to 1358 (GHHDIITDIATFQTTQGFIVTASRDGIVKVWK).

It belongs to the protein kinase superfamily. Ser/Thr protein kinase family. In terms of assembly, component of the PI3K (PI3KC3/PI3K-III/class III phosphatidylinositol 3-kinase) complex the core of which is composed of the catalytic subunit PIK3C3, the regulatory subunit PIK3R4 and BECN1 associating with additional regulatory/auxiliary subunits to form alternative complex forms. Alternative complex forms containing a fourth regulatory subunit in a mutually exclusive manner are PI3K complex I (PI3KC3-C1) containing ATG14, and PI3K complex II (PI3KC3-C2) containing UVRAG. PI3KC3-C1 displays a V-shaped architecture with PIK3R4 serving as a bridge between PIK3C3 and the ATG14:BECN1 subcomplex. Both, PI3KC3-C1 and PI3KC3-C2, can associate with further regulatory subunits, such as RUBCN, SH3GLB1/Bif-1, AMBRA1 and NRBF2. PI3KC3-C1 probably associates with PIK3CB. Interacts with RAB7A in the presence of PIK3C3/VPS34. Interacts with NRBF2. Interacts with ARMC3. Mn(2+) is required as a cofactor. In terms of processing, myristoylated. Post-translationally, probably autophosphorylated.

It is found in the late endosome. The protein localises to the cytoplasmic vesicle. Its subcellular location is the autophagosome. The protein resides in the membrane. The catalysed reaction is L-seryl-[protein] + ATP = O-phospho-L-seryl-[protein] + ADP + H(+). It catalyses the reaction L-threonyl-[protein] + ATP = O-phospho-L-threonyl-[protein] + ADP + H(+). Functionally, regulatory subunit of the PI3K complex that mediates formation of phosphatidylinositol 3-phosphate; different complex forms are believed to play a role in multiple membrane trafficking pathways: PI3KC3-C1 is involved in initiation of autophagosomes and PI3KC3-C2 in maturation of autophagosomes and endocytosis. Involved in regulation of degradative endocytic trafficking and cytokinesis, probably in the context of PI3KC3-C2. In Rattus norvegicus (Rat), this protein is Phosphoinositide 3-kinase regulatory subunit 4 (Pik3r4).